Consider the following 426-residue polypeptide: Dihydroorotase (426 aa).

Positions 58 and 60 each coordinate Zn(2+). Residues histidine 60 to arginine 62 and asparagine 92 each bind substrate. Zn(2+) is bound by residues aspartate 150, histidine 177, and histidine 230. A substrate-binding site is contributed by asparagine 276. Aspartate 303 contacts Zn(2+). Aspartate 303 is an active-site residue. Residues histidine 307 and phenylalanine 321–glycine 322 contribute to the substrate site.

The protein belongs to the metallo-dependent hydrolases superfamily. DHOase family. Class I DHOase subfamily. The cofactor is Zn(2+).

The enzyme catalyses (S)-dihydroorotate + H2O = N-carbamoyl-L-aspartate + H(+). It participates in pyrimidine metabolism; UMP biosynthesis via de novo pathway; (S)-dihydroorotate from bicarbonate: step 3/3. Functionally, catalyzes the reversible cyclization of carbamoyl aspartate to dihydroorotate. The protein is Dihydroorotase of Listeria innocua serovar 6a (strain ATCC BAA-680 / CLIP 11262).